We begin with the raw amino-acid sequence, 374 residues long: Potassium channel subfamily K member 9 (374 aa).

At 1–8 (MKRQNVRT) the chain is on the cytoplasmic side. A helical membrane pass occupies residues 9 to 29 (LSLIVCTFTYLLVGAAVFDAL). Residues 30–88 (ESDHEMREEEKLKAEEIRIKGKYNISSEDYRQLELVILQSEPHRAGVQWKFAGSFYFAI) lie on the Extracellular side of the membrane. Residue Asn53 is glycosylated (N-linked (GlcNAc...) asparagine). Positions 89–101 (TVITTIGYGHAAP) form an intramembrane region, pore-forming. K(+) is bound by residues Thr93, Ile94, Gly95, and Tyr96. The segment at 93 to 98 (TIGYGH) is selectivity filter 1. The Extracellular portion of the chain corresponds to 102–107 (GTDAGK). A helical membrane pass occupies residues 108-128 (AFCMFYAVLGIPLTLVMFQSL). The Cytoplasmic segment spans residues 129-158 (GERMNTFVRYLLKRIKKCCGMRNTDVSMEN). A helical transmembrane segment spans residues 159-179 (MVTVGFFSCMGTLCIGAAAFS). Over 180-194 (QCEEWSFFHAYYYCF) the chain is Extracellular. The segment at residues 195–207 (ITLTTIGFGDYVA) is an intramembrane region (pore-forming). K(+) is bound by residues Thr199, Ile200, Gly201, and Phe202. The tract at residues 199–204 (TIGFGD) is selectivity filter 2. Topologically, residues 208 to 218 (LQTKGALQKKP) are extracellular. The helical transmembrane segment at 219-239 (LYVAFSFMYILVGLTVIGAFL) threads the bilayer. Residues 240–374 (NLVVLRFLTM…QRLMKRRKSV (135 aa)) are Cytoplasmic-facing. The segment at 243 to 248 (VLRFLT) is X-gate.

It belongs to the two pore domain potassium channel (TC 1.A.1.8) family. As to quaternary structure, homodimer. Heterodimer with KCNK1. Heterodimer with KCNK3. In terms of tissue distribution, mainly found in the cerebellum. Also found in adrenal gland, kidney and lung.

The protein localises to the cell membrane. It is found in the mitochondrion inner membrane. Its subcellular location is the cell projection. The protein resides in the dendrite. It catalyses the reaction K(+)(in) = K(+)(out). The enzyme catalyses Na(+)(in) = Na(+)(out). Inhibited by extracellular acidification adopting a nonconductive conformation at pH 6.0. Inhibited by phorbol 12-myristate 13-acetate (PMA). In terms of biological role, k(+) channel that conducts voltage-dependent outward rectifying currents upon membrane depolarization. Voltage sensing is coupled to K(+) electrochemical gradient in an 'ion flux gating' mode where outward but not inward ion flow opens the gate. Changes ion selectivity and becomes permeable to Na(+) ions in response to extracellular acidification. Protonation of the pH sensor His-98 stabilizes C-type inactivation conformation likely converting the channel from outward K(+)-conducting, to inward Na(+)-conducting to nonconductive state. Homo- and heterodimerizes to form functional channels with distinct regulatory and gating properties. Allows K(+) currents with fast-gating kinetics important for the repolarization and hyperpolarization phases of action potentials. In granule neurons, hyperpolarizes the resting membrane potential to limit intrinsic neuronal excitability, but once the action potential threshold is reached, supports high-frequency action potential firing and increased neuronal excitability. Homomeric and/or heteromeric KCNK3:KCNK9 channels operate in cerebellar granule cells, whereas heteromeric KCNK1:KCNK9 enables currents in hippocampal dentate gyrus granule neurons. Dispensable for central chemosensory respiration i.e. breathing controlled by brainstem CO2/pH, it rather conducts pH-sensitive currents and controls the firing rate of serotonergic raphe neurons involved in potentiation of the respiratory chemoreflex. In retinal ganglion cells, mediates outward currents that regulate action potentials in response to acidification of the synaptic cleft. Involved in transmission of image-forming and nonimage-forming visual information in the retina. In adrenal gland, contributes to the maintenance of a hyperpolarized resting membrane potential of aldosterone-producing cells at zona glomerulosa and limits aldosterone release as part of a regulatory mechanism that controls arterial blood pressure and electrolyte homeostasis. This chain is Potassium channel subfamily K member 9, found in Homo sapiens (Human).